The sequence spans 426 residues: Probable serine/threonine-protein kinase PBL3 (426 aa).

A disordered region spans residues 1-42 (MGNCLDSSAKVDSSSHSPHANSASLSSRVSSKTSRSTVPSSL). The N-myristoyl glycine moiety is linked to residue G2. A lipid anchor (S-palmitoyl cysteine) is attached at C4. The span at 7–42 (SSAKVDSSSHSPHANSASLSSRVSSKTSRSTVPSSL) shows a compositional bias: low complexity. T72 bears the Phosphothreonine mark. The 284-residue stretch at 83 to 366 (FRPDSLLGEG…SEVLAKLDQL (284 aa)) folds into the Protein kinase domain. Residues 89–97 (LGEGGFGYV) and K121 contribute to the ATP site. Y166 carries the post-translational modification Phosphotyrosine. The active-site Proton acceptor is D216. S250 carries the phosphoserine modification. A phosphothreonine mark is found at T251 and T256. Y264 carries the phosphotyrosine modification. Residues 367–394 (ESTKPGTGVGNRQAQIDSPRGSNGSIVQ) are compositionally biased toward polar residues. Positions 367 to 426 (ESTKPGTGVGNRQAQIDSPRGSNGSIVQKSPRRYSYDRPLLHITPGASPLPTHNHSPRVR) are disordered.

It belongs to the protein kinase superfamily. Ser/Thr protein kinase family. Interacts with the Xanthomonas campestris effector XopAC/AvrAC. Strongly expressed in leaves, moderately in flowers, and barely in roots.

The protein resides in the cell membrane. It is found in the nucleus. The catalysed reaction is L-seryl-[protein] + ATP = O-phospho-L-seryl-[protein] + ADP + H(+). It carries out the reaction L-threonyl-[protein] + ATP = O-phospho-L-threonyl-[protein] + ADP + H(+). In terms of biological role, may be involved in plant defense signaling. This Arabidopsis thaliana (Mouse-ear cress) protein is Probable serine/threonine-protein kinase PBL3.